A 229-amino-acid chain; its full sequence is Potassium/proton antiporter CemA (229 aa).

3 consecutive transmembrane segments (helical) span residues 6 to 26 (AFIP…ISLC), 107 to 127 (ILHF…SFWG), and 189 to 209 (ILSG…KYWI).

It belongs to the CemA family.

The protein resides in the plastid. The protein localises to the chloroplast inner membrane. The enzyme catalyses K(+)(in) + H(+)(out) = K(+)(out) + H(+)(in). Contributes to K(+)/H(+) antiport activity by supporting proton efflux to control proton extrusion and homeostasis in chloroplasts in a light-dependent manner to modulate photosynthesis. Prevents excessive induction of non-photochemical quenching (NPQ) under continuous-light conditions. Indirectly promotes efficient inorganic carbon uptake into chloroplasts. The protein is Potassium/proton antiporter CemA of Lepidium virginicum (Virginia pepperweed).